The following is a 415-amino-acid chain: Gamma-glutamyl phosphate reductase (415 aa).

It belongs to the gamma-glutamyl phosphate reductase family.

The protein resides in the cytoplasm. The catalysed reaction is L-glutamate 5-semialdehyde + phosphate + NADP(+) = L-glutamyl 5-phosphate + NADPH + H(+). It participates in amino-acid biosynthesis; L-proline biosynthesis; L-glutamate 5-semialdehyde from L-glutamate: step 2/2. Functionally, catalyzes the NADPH-dependent reduction of L-glutamate 5-phosphate into L-glutamate 5-semialdehyde and phosphate. The product spontaneously undergoes cyclization to form 1-pyrroline-5-carboxylate. The chain is Gamma-glutamyl phosphate reductase from Parabacteroides distasonis (strain ATCC 8503 / DSM 20701 / CIP 104284 / JCM 5825 / NCTC 11152).